We begin with the raw amino-acid sequence, 461 residues long: tRNA modification GTPase MnmE (461 aa).

(6S)-5-formyl-5,6,7,8-tetrahydrofolate-binding residues include Arg23, Glu84, and Arg123. One can recognise a TrmE-type G domain in the interval 216-383 (GARAALIGRP…LGATVARLLL (168 aa)). A K(+)-binding site is contributed by Asn226. Residues 226–231 (NAGKSS), 245–251 (TPIPGTT), and 270–273 (DTAG) contribute to the GTP site. Ser230 contacts Mg(2+). K(+) contacts are provided by Thr245, Ile247, and Thr250. Mg(2+) is bound at residue Thr251. A (6S)-5-formyl-5,6,7,8-tetrahydrofolate-binding site is contributed by Lys461.

Belongs to the TRAFAC class TrmE-Era-EngA-EngB-Septin-like GTPase superfamily. TrmE GTPase family. In terms of assembly, homodimer. Heterotetramer of two MnmE and two MnmG subunits. K(+) is required as a cofactor.

It localises to the cytoplasm. Its function is as follows. Exhibits a very high intrinsic GTPase hydrolysis rate. Involved in the addition of a carboxymethylaminomethyl (cmnm) group at the wobble position (U34) of certain tRNAs, forming tRNA-cmnm(5)s(2)U34. This is tRNA modification GTPase MnmE from Roseiflexus sp. (strain RS-1).